The primary structure comprises 214 residues: uncharacterized protein (214 aa).

A helical transmembrane segment spans residues 10–30 (LLLAGIGGFMVGGLASWVVSS). Over residues 147 to 157 (SSQANSQSTQP) the composition is skewed to polar residues. The interval 147–166 (SSQANSQSTQPRDPIPTENF) is disordered.

The protein localises to the membrane. This is an uncharacterized protein from Schizosaccharomyces pombe (strain 972 / ATCC 24843) (Fission yeast).